The sequence spans 586 residues: Glutamine--tRNA ligase (586 aa).

Residues 58-68 (PEPNGYLHIGH) carry the 'HIGH' region motif. ATP-binding positions include 59-61 (EPN) and 65-71 (HIGHAKS). L-glutamine-binding residues include Asp91 and Tyr240. Residues Thr259 and 294–295 (RL) each bind ATP. The 'KMSKS' region motif lies at 301-305 (VTSKR).

It belongs to the class-I aminoacyl-tRNA synthetase family. Monomer.

The protein resides in the cytoplasm. It catalyses the reaction tRNA(Gln) + L-glutamine + ATP = L-glutaminyl-tRNA(Gln) + AMP + diphosphate. The sequence is that of Glutamine--tRNA ligase from Bordetella avium (strain 197N).